A 323-amino-acid chain; its full sequence is Porphobilinogen deaminase (323 aa).

The residue at position 240 (Cys240) is an S-(dipyrrolylmethanemethyl)cysteine.

Belongs to the HMBS family. Monomer. The cofactor is dipyrromethane.

The catalysed reaction is 4 porphobilinogen + H2O = hydroxymethylbilane + 4 NH4(+). The protein operates within porphyrin-containing compound metabolism; protoporphyrin-IX biosynthesis; coproporphyrinogen-III from 5-aminolevulinate: step 2/4. Its function is as follows. Tetrapolymerization of the monopyrrole PBG into the hydroxymethylbilane pre-uroporphyrinogen in several discrete steps. The sequence is that of Porphobilinogen deaminase from Sulfurovum sp. (strain NBC37-1).